Consider the following 714-residue polypeptide: MAEEVITPVYCTGVSAQVQKLRAKELGLGRHENAIKYLGQDYEQLRAHCLQSGSLFRDEAFPPVPQSLGFKELGPNSSKTYGVKWKRPTELFSNPQFIVDGATRTDICQGALGDCWLLAAIASLTLNDTLLHRVVPHGQSFQNGYAGIFHFQLWQFGEWVDVVVDDLLPTKDGKLVFVHSAQGNEFWSALLEKAYAKVNGSYEALSGGSTSEGFEDFTGGVTEWYELRKAPSDLYSIILKALERGSLLGCSIDISSVLDMEAVTFKKLVKGHAYSVTGAKQVNYQGQMVNLIRMRNPWGEVEWTGAWSDGSSEWNGVDPYQRDQLRVRMEDGEFWMSFRDFLREFTRLEICNLTPDALKSQRVRNWNTTLYEGTWRRGSTAGGCRNYPATFWVNPQFKIRLEETDDPEDDYGGRESGCSFVLALMQKHRRRERRFGRDMETIGFAVYEVPPELVGQPVHLKRDFFLANASRARSEQFINLREVSTRFRLPPGEYVVVPSTFEPNKEGDFVLRFFSEKKAGTQELDDQVQAILPDEQVLSEEEIDENFKALFRQLAGEDMEISVRELRTILNRIISKHKDLRTKGFSLESCRSMVNLMDRDGNGKLGLVEFNILWNRIRNYLSIFRKFDLDKSGSMSAYEMRMAIESAGFKLNKKLFELIITRYSEPDLAVDFDNFVCCLVRLETMFRFFKTLDTDLDGVVTFDLFKWLQLTMFA.

Positions 55-354 (LFRDEAFPPV…FTRLEICNLT (300 aa)) constitute a Calpain catalytic domain. Ca(2+)-binding residues include glutamine 109 and aspartate 114. Active-site residues include cysteine 115, histidine 272, and asparagine 296. Positions 318 and 323 each coordinate Ca(2+). Threonine 354 is subject to Phosphothreonine. Residues 355 to 526 (PDALKSQRVR…KKAGTQELDD (172 aa)) form a domain III region. Positions 527-542 (QVQAILPDEQVLSEEE) are linker. A domain IV region spans residues 543 to 713 (IDENFKALFR…LFKWLQLTMF (171 aa)). 3 consecutive EF-hand domains span residues 585-618 (FSLE…NRIR), 615-650 (NRIR…AGFK), and 680-714 (VRLE…TMFA). Residues aspartate 598, aspartate 600, asparagine 602, lysine 604, glutamate 609, aspartate 628, aspartate 630, serine 632, serine 634, and glutamate 639 each contribute to the Ca(2+) site.

It belongs to the peptidase C2 family. As to quaternary structure, forms a heterodimer with a small (regulatory) subunit CAPNS1. Requires Ca(2+) as cofactor. Post-translationally, undergoes calcium-induced successive autoproteolytic cleavages that generate a membrane-bound 78 kDa active form and an intracellular 75 kDa active form. Calpastatin reduces with high efficiency the transition from 78 kDa to 75 kDa calpain forms.

It is found in the cytoplasm. Its subcellular location is the cell membrane. It catalyses the reaction Broad endopeptidase specificity.. Activated by micromolar concentrations of calcium and inhibited by calpastatin. In terms of biological role, calcium-regulated non-lysosomal thiol-protease which catalyzes limited proteolysis of substrates involved in cytoskeletal remodeling and signal transduction. Proteolytically cleaves CTBP1. Cleaves and activates caspase-7 (CASP7). The chain is Calpain-1 catalytic subunit from Sus scrofa (Pig).